Reading from the N-terminus, the 523-residue chain is Nuclear receptor ROR-alpha (523 aa).

Over residues 1-26 the composition is skewed to low complexity; sequence MESAPAAPDPAASEPGSSGSEAAAGS. Residues 1 to 63 form a disordered region; it reads MESAPAAPDP…SRGISVTKKT (63 aa). Lys-38 bears the N6-methyllysine mark. 2 consecutive NR C4-type zinc fingers follow at residues 73 to 93 and 109 to 133; these read CKIC…CEGC and CPRQ…LQKC. The segment at residues 73-138 is a DNA-binding region (nuclear receptor); it reads CKICGDKSSG…RLQKCLAVGM (66 aa). A disordered region spans residues 154-183; it reads DSLYAEVQKHRMQQQQRDHQQQPGEAEPLT. Thr-183 carries the post-translational modification Phosphothreonine; by MAPK1. A Glycyl lysine isopeptide (Lys-Gly) (interchain with G-Cter in SUMO) cross-link involves residue Lys-240. Residues 272–510 enclose the NR LBD domain; sequence ELEHLAQNIS…LHFPPLYKEL (239 aa). The short motif at 506-511 is the AF-2 element; the sequence is LYKELF.

This sequence belongs to the nuclear hormone receptor family. NR1 subfamily. In terms of assembly, monomer. Interacts (via the DNA-binding domain) with HIF1A; the interaction enhances HIF1A transcription under hypoxia through increasing protein stability. Interacts with CEBPB; the interaction disrupts the interaction CEBPB:EP300. Interacts with the coactivators NCOA2, PPARGC1A (via LXXLL motif), EP300 and MED1. Interacts with the corepressor NCOR1. Interacts with MAGED1 and CTNNB1. Interacts with CRY1 and PER2. Interacts (via AF-2 motif) with PROX1. Interacts with NRIP1. Isoform 4 interacts (via AF-2 motif) with isoform 1 of FOXP3 (via LXXLL motif). Post-translationally, phosphorylation by conventional PKCs in neurons inhibits transcriptional activity. Phosphorylated on Thr-183 by MAPK1/ERK1 in vitro. Sumoylated by SENP1 and SENP2. Sumoylation, promoted by PIAS2, PIAS3, PIAS4 but not PIAS1, enhances the transcriptional activity. Desumoylated by SENP1. In terms of processing, ubiquitinated, leading to its degradation by the proteasome. Proteasomal degradation is required for efficient transcriptional activity and is prevented by HR. Post-translationally, monomethylated at Lys-38 by EZH2, this creates a degron recognized by a DCX (DDB1-DCAF1/VPRBP-CUL4A-RBX1) E3 ubiquitin ligase complex. In terms of tissue distribution, expressed in cerebellum, heart, liver, lung, kidney, retina and brown and white adipose tissues. Expressed in the subset of mature Th17 cells.

It is found in the nucleus. Nuclear receptor that binds DNA as a monomer to ROR response elements (RORE) containing a single core motif half-site 5'-AGGTCA-3' preceded by a short A-T-rich sequence. Key regulator of embryonic development, cellular differentiation, immunity, circadian rhythm as well as lipid, steroid, xenobiotics and glucose metabolism. Considered to have intrinsic transcriptional activity, have some natural ligands like oxysterols that act as agonists (25-hydroxycholesterol) or inverse agonists (7-oxygenated sterols), enhancing or repressing the transcriptional activity, respectively. Recruits distinct combinations of cofactors to target genes regulatory regions to modulate their transcriptional expression, depending on the tissue, time and promoter contexts. Regulates genes involved in photoreceptor development including OPN1SW, OPN1SM and ARR3 and skeletal muscle development with MYOD1. Required for proper cerebellum development, regulates SHH gene expression, among others, to induce granule cells proliferation as well as expression of genes involved in calcium-mediated signal transduction. Regulates the circadian expression of several clock genes, including CLOCK, BMAL1, NPAS2 and CRY1. Competes with NR1D1 for binding to their shared DNA response element on some clock genes such as BMAL1, CRY1 and NR1D1 itself, resulting in NR1D1-mediated repression or RORA-mediated activation of clock genes expression, leading to the circadian pattern of clock genes expression. Therefore influences the period length and stability of the clock. Regulates genes involved in lipid metabolism such as apolipoproteins APOA1, APOA5, APOC3 and PPARG. In liver, has specific and redundant functions with RORC as positive or negative modulator of expression of genes encoding phase I and phase II proteins involved in the metabolism of lipids, steroids and xenobiotics, such as CYP7B1 and SULT2A1. Induces a rhythmic expression of some of these genes. In addition, interplays functionally with NR1H2 and NR1H3 for the regulation of genes involved in cholesterol metabolism. Also involved in the regulation of hepatic glucose metabolism through the modulation of G6PC1 and PCK1. In adipose tissue, plays a role as negative regulator of adipocyte differentiation, probably acting through dual mechanisms. May suppress CEBPB-dependent adipogenesis through direct interaction and PPARG-dependent adipogenesis through competition for DNA-binding. Downstream of IL6 and TGFB and synergistically with RORC isoform 2, is implicated in the lineage specification of uncommitted CD4(+) T-helper (T(H)) cells into T(H)17 cells, antagonizing the T(H)1 program. Probably regulates IL17 and IL17F expression on T(H) by binding to the essential enhancer conserved non-coding sequence 2 (CNS2) in the IL17-IL17F locus. Involved in hypoxia signaling by interacting with and activating the transcriptional activity of HIF1A. May inhibit cell growth in response to cellular stress. May exert an anti-inflammatory role by inducing CHUK expression and inhibiting NF-kappa-B signaling. The sequence is that of Nuclear receptor ROR-alpha (Rora) from Mus musculus (Mouse).